We begin with the raw amino-acid sequence, 359 residues long: 3-dehydroquinate synthase (359 aa).

NAD(+) is bound by residues aspartate 71–lysine 76, glycine 105–aspartate 109, threonine 129–threonine 130, lysine 142, and lysine 151. Positions 184, 247, and 264 each coordinate Zn(2+).

The protein belongs to the sugar phosphate cyclases superfamily. Dehydroquinate synthase family. Co(2+) is required as a cofactor. It depends on Zn(2+) as a cofactor. The cofactor is NAD(+).

The protein localises to the cytoplasm. The enzyme catalyses 7-phospho-2-dehydro-3-deoxy-D-arabino-heptonate = 3-dehydroquinate + phosphate. The protein operates within metabolic intermediate biosynthesis; chorismate biosynthesis; chorismate from D-erythrose 4-phosphate and phosphoenolpyruvate: step 2/7. Its function is as follows. Catalyzes the conversion of 3-deoxy-D-arabino-heptulosonate 7-phosphate (DAHP) to dehydroquinate (DHQ). The polypeptide is 3-dehydroquinate synthase (Burkholderia ambifaria (strain ATCC BAA-244 / DSM 16087 / CCUG 44356 / LMG 19182 / AMMD) (Burkholderia cepacia (strain AMMD))).